A 323-amino-acid polypeptide reads, in one-letter code: Acetyl-coenzyme A carboxylase carboxyl transferase subunit alpha (323 aa).

A CoA carboxyltransferase C-terminal domain is found at 39-293 (RLSKKSQQLT…RRALADSLRQ (255 aa)).

This sequence belongs to the AccA family. As to quaternary structure, acetyl-CoA carboxylase is a heterohexamer composed of biotin carboxyl carrier protein (AccB), biotin carboxylase (AccC) and two subunits each of ACCase subunit alpha (AccA) and ACCase subunit beta (AccD).

Its subcellular location is the cytoplasm. The catalysed reaction is N(6)-carboxybiotinyl-L-lysyl-[protein] + acetyl-CoA = N(6)-biotinyl-L-lysyl-[protein] + malonyl-CoA. It participates in lipid metabolism; malonyl-CoA biosynthesis; malonyl-CoA from acetyl-CoA: step 1/1. In terms of biological role, component of the acetyl coenzyme A carboxylase (ACC) complex. First, biotin carboxylase catalyzes the carboxylation of biotin on its carrier protein (BCCP) and then the CO(2) group is transferred by the carboxyltransferase to acetyl-CoA to form malonyl-CoA. This chain is Acetyl-coenzyme A carboxylase carboxyl transferase subunit alpha, found in Burkholderia lata (strain ATCC 17760 / DSM 23089 / LMG 22485 / NCIMB 9086 / R18194 / 383).